The sequence spans 288 residues: Polyketide biosynthesis malonyl CoA-acyl carrier protein transacylase PksC (288 aa).

Catalysis depends on residues serine 87 and histidine 193.

This sequence belongs to the FabD family.

The protein resides in the cytoplasm. The enzyme catalyses holo-[ACP] + malonyl-CoA = malonyl-[ACP] + CoA. Its pathway is antibiotic biosynthesis; bacillaene biosynthesis. In terms of biological role, involved in some intermediate steps for the synthesis of the antibiotic polyketide bacillaene which is involved in secondary metabolism. It catalyzes the transfer of the malonyl-CoA group to the acyl-carrier-protein AcpK (Mal-AcpK). The sequence is that of Polyketide biosynthesis malonyl CoA-acyl carrier protein transacylase PksC (pksC) from Bacillus subtilis (strain 168).